A 747-amino-acid chain; its full sequence is Polyribonucleotide nucleotidyltransferase (747 aa).

Positions 502 and 508 each coordinate Mg(2+). The 60-residue stretch at 569 to 628 (PRMLTITIDPDKIRDIIGPGGKIIKKIIEETGVEIDVEDDGRVFIASTDAAAGERALKII) folds into the KH domain. Residues 638–712 (GKVYNGKVTR…PQGRLKLSRK (75 aa)) enclose the S1 motif domain. Residues 718 to 747 (STVGEGGHRHFRRAGREGGHRGLNNRRQSR) are disordered.

This sequence belongs to the polyribonucleotide nucleotidyltransferase family. The cofactor is Mg(2+).

It is found in the cytoplasm. It carries out the reaction RNA(n+1) + phosphate = RNA(n) + a ribonucleoside 5'-diphosphate. In terms of biological role, involved in mRNA degradation. Catalyzes the phosphorolysis of single-stranded polyribonucleotides processively in the 3'- to 5'-direction. The chain is Polyribonucleotide nucleotidyltransferase from Moorella thermoacetica (strain ATCC 39073 / JCM 9320).